Consider the following 209-residue polypeptide: MVSSPCTQASSRTCSRILGLSLGTAALFAAGANVALLLPNWDVTYLLRGLLGRHAMLGTGLWGGGLMVLTAAILISLMGWRYGCFSKSGLCRSVLTALLSGGLALLGALICFVTSGVALKDGPFCMFDVSSFNQTQAWKYGYPFKDLHSRNYLYDRSLWNSVCLEPSAAVVWHVSLFSALLCISLLQLLLVVVHVINSLLGLFCSLCEK.

Residues 1-16 (MVSSPCTQASSRTCSR) lie on the Cytoplasmic side of the membrane. The chain crosses the membrane as a helical span at residues 17 to 37 (ILGLSLGTAALFAAGANVALL). Residues 38–59 (LPNWDVTYLLRGLLGRHAMLGT) lie on the Extracellular side of the membrane. Residues 60-80 (GLWGGGLMVLTAAILISLMGW) form a helical membrane-spanning segment. Residues 81 to 93 (RYGCFSKSGLCRS) lie on the Cytoplasmic side of the membrane. The chain crosses the membrane as a helical span at residues 94–114 (VLTALLSGGLALLGALICFVT). The Extracellular segment spans residues 115 to 175 (SGVALKDGPF…PSAAVVWHVS (61 aa)). The N-linked (GlcNAc...) asparagine glycan is linked to asparagine 133. Residues 176–196 (LFSALLCISLLQLLLVVVHVI) traverse the membrane as a helical segment. An important for homodimerization region spans residues 186–196 (LQLLLVVVHVI). The Cytoplasmic portion of the chain corresponds to 197–209 (NSLLGLFCSLCEK).

The protein belongs to the L6 tetraspanin family. As to quaternary structure, may form homodimers and homooligomers. Interacts with integrins ITGAV and ITGB3. Interacts with components of members of the V0 complex of vacuolar(H+)-ATPase (V-ATPase), including ATP6V0B and ATP6V0D2; this interaction inhibits V1-V0 complex assembly. As to expression, in adipose tissue, expressed by macrophages.

Its subcellular location is the lysosome membrane. It localises to the cytoplasm. The protein resides in the cytoskeleton. The protein localises to the cell projection. It is found in the filopodium. In terms of biological role, negatively regulates vacuolar (H+)-ATPase (V-ATPase) activity by interacting with members of V-ATPase V0 complex and hence inhibiting V1-V0 complex assembly. Required for multinucleation during osteoclast differentiation. This is Transmembrane 4 L6 family member 19 (TM4SF19) from Homo sapiens (Human).